Here is a 255-residue protein sequence, read N- to C-terminus: tRNA pseudouridine synthase A (255 aa).

Catalysis depends on Asp-52, which acts as the Nucleophile. Position 111 (Tyr-111) interacts with substrate.

The protein belongs to the tRNA pseudouridine synthase TruA family. Homodimer.

It catalyses the reaction uridine(38/39/40) in tRNA = pseudouridine(38/39/40) in tRNA. In terms of biological role, formation of pseudouridine at positions 38, 39 and 40 in the anticodon stem and loop of transfer RNAs. In Cereibacter sphaeroides (strain KD131 / KCTC 12085) (Rhodobacter sphaeroides), this protein is tRNA pseudouridine synthase A.